The primary structure comprises 523 residues: MIKQALLSVSDKTGIVEFARELNALGVTLLSTGGTAKLLADSGLPVTEVADYTGFPEMLDGRVKTLHPKVHGGILARRDLPEHMAALAEHDIPTIDLLVVNLYPFQQTVAKDDCTLPDAIENIDIGGPTMLRSAAKNHRDVTVIVDPVDYAVVLDEMRANGNKVGYDTNFRLATKVFAHTAQYDGAITNYLTSLGADKSHQARSAYPQTLNLAFEKVQEMRYGENPHQSAAFYRDLKAVDGALANYVQLQGKELSYNNIADADAAWECVKSFAVTTPACVIIKHANPCGVAVGANALEAYDKAFKTDSTSAFGGIIAFNVELDETAAQAVAKQFVEVLIAPSFSAAARAVFASKQNVRLLEIPLGKGINQYDLKRVGGGLLVQSPDAKNVQPTELRVVTRRHPTPKEMDDLMFAWRVAKFVKSNAIVFCGGGMTLGVGAGQMSRVDSARIASIKAQNAGLTLAGSAVASDAFFPFRDGLDVVVDAGATCVIQPGGSMRDDEVIAAADDRGIAMVLTGTRHFRH.

Residues 1 to 145 (MIKQALLSVS…KNHRDVTVIV (145 aa)) form the MGS-like domain.

Belongs to the PurH family.

It catalyses the reaction (6R)-10-formyltetrahydrofolate + 5-amino-1-(5-phospho-beta-D-ribosyl)imidazole-4-carboxamide = 5-formamido-1-(5-phospho-D-ribosyl)imidazole-4-carboxamide + (6S)-5,6,7,8-tetrahydrofolate. It carries out the reaction IMP + H2O = 5-formamido-1-(5-phospho-D-ribosyl)imidazole-4-carboxamide. It participates in purine metabolism; IMP biosynthesis via de novo pathway; 5-formamido-1-(5-phospho-D-ribosyl)imidazole-4-carboxamide from 5-amino-1-(5-phospho-D-ribosyl)imidazole-4-carboxamide (10-formyl THF route): step 1/1. Its pathway is purine metabolism; IMP biosynthesis via de novo pathway; IMP from 5-formamido-1-(5-phospho-D-ribosyl)imidazole-4-carboxamide: step 1/1. The polypeptide is Bifunctional purine biosynthesis protein PurH (Cupriavidus pinatubonensis (strain JMP 134 / LMG 1197) (Cupriavidus necator (strain JMP 134))).